Here is a 741-residue protein sequence, read N- to C-terminus: MEQTYQYAWIIPFLPLPVPMLIGLGLLLFPTATKSIRRMWAFQSVLLLSIVMIFSMNLSIQQINSSSVYQYVWSWIINNDISLEFGYLIDPLTSIMSILITTVGIMVLIYSDNYMSHDHGYLRFFAYMSFFSTSMLGLVTSSNLIQIYIFWELVGMCSYLLIGFWFTRPVAAKACQKAFVTNRVGDFGLLLGILGFYWITGSFEFRDLFQIFNNLISNNEVNLLFVTLCAVLLFAGAIAKSAQFPLHVWLPDAMEGPTPISALIHAATMVAAGIFLVARLMPLFIVIPHIMNFISLIGIITVFFGATLALAQKDIKRGLAYSTMSQLGYMMLALGMGSYRSALFHLITHAYSKALLFLGSGSVIHSMETLVGYCPKKSQNMVLMGGLTKHVPITKNSFLLGTLSLCGIPPLACFWSKDEILNDSWLYSPIFAIIAWSTAGLTAFYMCRIYLLTFEGHLNVHFQNYSGKRNTPLYSISLWGKEGSKISNKNFRLVTLLKMKKNGPPSFFSNKVYKMDENVGNLVQPFISIPNFGNTKTSLYPYESDNTMLFPILIFIPFTLFVGFLGIPFNQDVDILSKWLTPSINLLHKNSNNLIDWYEFSKDAVFSVSIASFGIFIAFFLYKPVYSSFQNLDLINSFVKMGPKRIFSDKIKNAIYDWSYNRGYIDAFYGTFLTVGVRKLAEFTHFFDRRIIDGIPNGVGFISFFVAEVIKSVGGGRISSYLFFYFSYVSIFLLIYYFLNF.

16 helical membrane-spanning segments follow: residues 9 to 29 (WIIP…LLLF), 40 to 60 (WAFQ…NLSI), 89 to 109 (IDPL…MVLI), 125 to 145 (FAYM…SNLI), 147 to 167 (IYIF…FWFT), 185 to 205 (GDFG…SFEF), 219 to 239 (NEVN…GAIA), 258 to 278 (TPIS…FLVA), 284 to 304 (FIVI…TVFF), 327 to 347 (LGYM…FHLI), 354 to 374 (ALLF…VGYC), 396 to 416 (NSFL…CFWS), 425 to 445 (WLYS…TAFY), 549 to 569 (LFPI…GIPF), 605 to 625 (VFSV…YKPV), and 721 to 741 (YLFF…FLNF).

It belongs to the complex I subunit 5 family. In terms of assembly, NDH is composed of at least 16 different subunits, 5 of which are encoded in the nucleus.

It localises to the plastid. It is found in the chloroplast thylakoid membrane. It catalyses the reaction a plastoquinone + NADH + (n+1) H(+)(in) = a plastoquinol + NAD(+) + n H(+)(out). The catalysed reaction is a plastoquinone + NADPH + (n+1) H(+)(in) = a plastoquinol + NADP(+) + n H(+)(out). Functionally, NDH shuttles electrons from NAD(P)H:plastoquinone, via FMN and iron-sulfur (Fe-S) centers, to quinones in the photosynthetic chain and possibly in a chloroplast respiratory chain. The immediate electron acceptor for the enzyme in this species is believed to be plastoquinone. Couples the redox reaction to proton translocation, and thus conserves the redox energy in a proton gradient. The polypeptide is NAD(P)H-quinone oxidoreductase subunit 5, chloroplastic (ndhF) (Flaveria ramosissima (Yellowtops)).